The primary structure comprises 722 residues: Glycine--tRNA ligase beta subunit (722 aa).

The protein belongs to the class-II aminoacyl-tRNA synthetase family. In terms of assembly, tetramer of two alpha and two beta subunits.

Its subcellular location is the cytoplasm. The enzyme catalyses tRNA(Gly) + glycine + ATP = glycyl-tRNA(Gly) + AMP + diphosphate. This chain is Glycine--tRNA ligase beta subunit (glyS), found in Xylella fastidiosa (strain 9a5c).